Consider the following 158-residue polypeptide: Toxin Tse2 (158 aa).

As to quaternary structure, forms a heterotetramer with Tsi2 consisting of two Tse2 dimers and two Tsi2 dimers. Formation of the complex inactivates Tse2 enzymatic activity.

It is found in the secreted. Functionally, toxin secreted by the H1 type VI (H1-T6SS) secretion system into the cytoplasm of recipient cells. Acts likely as a NAD-dependent cytotoxin towards both prokaryotic and eukaryotic cells. The sequence is that of Toxin Tse2 from Pseudomonas aeruginosa (strain ATCC 15692 / DSM 22644 / CIP 104116 / JCM 14847 / LMG 12228 / 1C / PRS 101 / PAO1).